Here is a 75-residue protein sequence, read N- to C-terminus: MPKYYEEKEEDKHPCAGVKEDLKSCLLQTDCVLQEGKSPKECLKEGYCKALQVTFFECKRSILDTRARFRGRKGY.

The region spanning 28–66 is the CHCH domain; it reads QTDCVLQEGKSPKECLKEGYCKALQVTFFECKRSILDTR. The short motif at 31–42 is the Cx10C motif element; it reads CVLQEGKSPKEC. Cystine bridges form between C31-C58 and C42-C48. The Cx9C motif signature appears at 48–58; that stretch reads CKALQVTFFEC.

The protein belongs to the PET191 family.

Involved in an early step of the mitochondrial complex IV assembly process. The protein is Cytochrome c oxidase assembly factor 5 (coa5) of Xenopus tropicalis (Western clawed frog).